The primary structure comprises 254 residues: MKIDLNCDLGEGYGAWQMGDDAAMMSIATSVNIACGFHAGDPDIMHKTVTMAKAHGVSIGAHPGFRDLHGFGRRPVPGITAAEIENLVAYQIGALQAVAALAGHKVTHVKAHGALSNVACEDDMTARAVAAAIKAVDPKLIFVVLANSKLVDAGEAAGLAMAHEVFADRTYEDDGNLVSRRKPGAVLHDAREIAQRVVRMVQDGAVVSVTGKIIKMRIDTVCIHGDTPGAVDIARGVRLALEERGATVVPFARR.

This sequence belongs to the LamB/PxpA family. As to quaternary structure, forms a complex composed of PxpA, PxpB and PxpC.

The enzyme catalyses 5-oxo-L-proline + ATP + 2 H2O = L-glutamate + ADP + phosphate + H(+). In terms of biological role, catalyzes the cleavage of 5-oxoproline to form L-glutamate coupled to the hydrolysis of ATP to ADP and inorganic phosphate. The chain is 5-oxoprolinase subunit A from Rhodopseudomonas palustris (strain BisB5).